The following is a 222-amino-acid chain: UPF0173 metal-dependent hydrolase Mboo_0816 (222 aa).

The protein belongs to the UPF0173 family.

In Methanoregula boonei (strain DSM 21154 / JCM 14090 / 6A8), this protein is UPF0173 metal-dependent hydrolase Mboo_0816.